The sequence spans 419 residues: Cell division protein FtsZ (419 aa).

GTP-binding positions include 22–26 (GGGGN), 109–111 (GSG), glutamate 140, arginine 144, and aspartate 188. The segment at 397–419 (ERFEAPISQDEDELDTPPFFKNR) is disordered.

Belongs to the FtsZ family. As to quaternary structure, homodimer. Polymerizes to form a dynamic ring structure in a strictly GTP-dependent manner. Interacts directly with several other division proteins. Interacts with CcrZ; the interaction is direct.

The protein resides in the cytoplasm. Functionally, essential cell division protein that forms a contractile ring structure (Z ring) at the future cell division site. The regulation of the ring assembly controls the timing and the location of cell division. One of the functions of the FtsZ ring is to recruit other cell division proteins to the septum to produce a new cell wall between the dividing cells. Binds GTP and shows GTPase activity. The protein is Cell division protein FtsZ of Streptococcus pneumoniae serotype 2 (strain D39 / NCTC 7466).